Reading from the N-terminus, the 600-residue chain is Terpenoid synthase 8 (600 aa).

Mg(2+) is bound by residues D352, D356, N497, and D505. Residues 352–356 (DDTCD) carry the DDXXD motif motif.

Belongs to the terpene synthase family. Tpsa subfamily. It depends on Mg(2+) as a cofactor. Requires Mn(2+) as cofactor. As to expression, stele, and tips of primary and secondary root.

It is found in the plastid. The catalysed reaction is (2E,6E,10E)-geranylgeranyl diphosphate = rhizathalene A + diphosphate. It participates in secondary metabolite biosynthesis; terpenoid biosynthesis. Functionally, catalyzes the synthesis of the semivolatile diterpene rhizatalene A. This is Terpenoid synthase 8 (TPS08) from Arabidopsis thaliana (Mouse-ear cress).